A 330-amino-acid chain; its full sequence is D-alanine--D-alanine ligase (330 aa).

Residues 120 to 326 (KLWYDALGIP…FKTFLQKAVL (207 aa)) form the ATP-grasp domain. 150-205 (AFKQWGGLFVKAACQGSSVGCYKVTSEEELAQAINGAFGYSQQVLVEKAVKPRELE) is an ATP binding site. The Mg(2+) site is built by D280, E293, and N295.

It belongs to the D-alanine--D-alanine ligase family. The cofactor is Mg(2+). Mn(2+) serves as cofactor.

Its subcellular location is the cytoplasm. It catalyses the reaction 2 D-alanine + ATP = D-alanyl-D-alanine + ADP + phosphate + H(+). Its pathway is cell wall biogenesis; peptidoglycan biosynthesis. Cell wall formation. This chain is D-alanine--D-alanine ligase, found in Aliivibrio fischeri (strain MJ11) (Vibrio fischeri).